The chain runs to 599 residues: MAQAWAFLLLPALALASYASHLLLPAYITTPLCGGGDGARSFFLCAQAPKDQDQDPSPASTMYKTAFHFQPAKNWMNDPSGPMYFNGIYHEFYQYNLNGPIFGDIVWGHSVSTDLVNWIGLEPALVRDTPSDIDGCWTGSVTILPGGKPVIIYTGGNIDQHQTQNIAFPKNRSDPYLREWIKAANNPVLRPDEPGMNVIEFRDPTTGWIGPDGHWRMAVGGELNGYSAALLYKSEDFLNWTKVDHPPYSHNGSNMWECPDFFAALPGNNGGLDLSAAIPQGAKHALKMSVDSVDKYMIGVYDLQRDAFVPDNVVDDRRLWLRMDYGTFYASKSFFDSKKGRRIVWGWSGETDSPSDDLAKGWAGLHTIPRTIWLAADGKQLLQWPVEEIESLRTNEINHQGLELNKGDLFEIKEVDAFQADVEIDFELASIDEAEPFDPSWLLDPEKHCGEAGASVPGGIGPFGLVILASDNMDEHTEVYFRVYKSQEKYMVLMCSDLRRSSLRPGLEKPAYGGFFEFDLAKERKISLRTLIDRSAVESFGGGGRVCITSRVYPAVLANVGRAHIYAFNNGNAMVRVPQLSAWTMRKAQVNVEKGWSAI.

Residues 1–16 (MAQAWAFLLLPALALA) form the signal peptide. Residue Asp78 is part of the active site. Residues Asn171, Asn239, and Asn251 are each glycosylated (N-linked (GlcNAc...) asparagine). A disulfide bridge links Cys449 with Cys495.

Belongs to the glycosyl hydrolase 32 family.

It catalyses the reaction Hydrolysis of terminal, non-reducing (2-&gt;1)-linked beta-D-fructofuranose residues in fructans.. With respect to regulation, inhibited by sucrose. Functionally, hydrolyzes inulin-type beta-(2,1)-fructans. May play a role as a beta-(2,1)-trimmer during graminan biosynthesis. The polypeptide is Fructan 1-exohydrolase (Hordeum vulgare (Barley)).